The chain runs to 1124 residues: tRNA (34-2'-O)-methyltransferase regulator WDR6 (1124 aa).

Position 1 is an N-acetylmethionine (Met-1). WD repeat units follow at residues 53 to 97 (MKRV…IVKI), 105 to 143 (RELWRSGLWNMSDWIWDARWLEGNIALALGHNSVVLYDP), 147 to 189 (CSLQ…VWYP), 200 to 238 (VPDRRVSGHVGVIFSMSYLESKGLLATASEDRSVRIWKV), 247 to 285 (RVQNIGHCFGHSARVWQVKLLENYLISAGEDCVCLVWSH), 289 to 327 (ILQAFRGHQGRGIRALAAHERQAWVITGGDDSGIRLWHL), 335 to 376 (SGVF…LYDL), 381 to 422 (WEQL…VVPI), 425 to 470 (PTAA…ISAA), 476 to 520 (IFVK…LYPS), 557 to 596 (PMSTLPSLHGKQGVTSVTCHGGYVYTTGRDGSYYQLFVRG), 602 to 640 (VLRQKPCRGMNWVAGVRMVADGNMVILGFHANEFVVWSP), 643 to 682 (HEKLHIINCGGGHRSWAFSDTEAAMAFAYLKDGDVMLYRA), 743 to 789 (LIDI…VWGV), 852 to 897 (RHRH…LFLL), 905 to 950 (QLLA…FWDL), 974 to 1015 (GSPC…VFVL), 1039 to 1076 (EEYSVPCAHAAHVTGLKILSRSLMVSASIDQRLTFWRL), and 1082 to 1124 (TFMN…NWYD).

The protein belongs to the WD repeat WDR6 family. As to quaternary structure, interacts with FTSJ1; the interaction is direct, and required for 2'-O-methylation of position 34 in substrate tRNAs. Interacts with IRS4. Interacts with STK11/LKB1.

The protein resides in the cytoplasm. Functionally, together with methyltransferase FTSJ1, methylates the 2'-O-ribose of nucleotides at position 34 of the tRNA anticodon loop of substrate tRNAs. Required for the correct positioning of the substrate tRNA for methylation. Required to suppress amino acid starvation-induced autophagy. Enhances the STK11/LKB1-induced cell growth suppression activity. In Bos taurus (Bovine), this protein is tRNA (34-2'-O)-methyltransferase regulator WDR6 (WDR6).